Consider the following 232-residue polypeptide: Large ribosomal subunit protein uL1 (232 aa).

Belongs to the universal ribosomal protein uL1 family. Part of the 50S ribosomal subunit.

Functionally, binds directly to 23S rRNA. The L1 stalk is quite mobile in the ribosome, and is involved in E site tRNA release. Protein L1 is also a translational repressor protein, it controls the translation of the L11 operon by binding to its mRNA. This chain is Large ribosomal subunit protein uL1, found in Xylella fastidiosa (strain 9a5c).